The chain runs to 30 residues: Trypsin inhibitor 3 (30 aa).

Intrachain disulfides connect Cys-4–Cys-21, Cys-11–Cys-23, and Cys-17–Cys-29.

It belongs to the protease inhibitor I7 (squash-type serine protease inhibitor) family.

It is found in the secreted. Inhibits trypsin. This is Trypsin inhibitor 3 from Momordica charantia (Bitter gourd).